The sequence spans 798 residues: Gelsolin (798 aa).

The first 28 residues, 1-28, serve as a signal peptide directing secretion; it reads MDASGAATMAVLSSLLVFLALSSSLCSA. Residues 57 to 181 form an actin-severing region; sequence RVMHPSFANA…YEQGGVGTGF (125 aa). Residues 78–131 form a Gelsolin-like 1 repeat; that stretch reads ENFEPVIYPKTNYGKFYTGDSFIVLNTIENKKDKKLSWDVHFWLGLETSTDEAG. A Phosphotyrosine; by SRC modification is found at tyrosine 90. The tract at residues 128–131 is actin-actin interfilament contact point; sequence DEAG. A 1,2-diacyl-sn-glycero-3-phospho-(1D-myo-inositol-4,5-bisphosphate) contacts are provided by residues 167-174 and 193-201; these read KNGIRYEQ and RLFQVKGKR. 4 Gelsolin-like repeats span residues 203 to 243, 322 to 365, 474 to 524, and 583 to 625; these read VRVR…VEKL, LKVD…KEKT, IVVS…AARK, and VHAS…FEKQ. The tract at residues 451 to 792 is actin-binding, Ca-sensitive; that stretch reads MPDHGQNVIE…SYEDMKQLVI (342 aa). Aspartate 599 contributes to the Ca(2+) binding site. At tyrosine 612 the chain carries Phosphotyrosine; by SRC. Residue glutamate 623 participates in Ca(2+) binding. Tyrosine 662 is modified (phosphotyrosine; by SRC). The Gelsolin-like 6 repeat unit spans residues 689-730; that stretch reads LKVEEVAQYEQEDLDSDDIMLLDAGDEIYLWVGYGVSEEENG. Residues aspartate 705, aspartate 706, and glutamate 728 each contribute to the Ca(2+) site.

The protein belongs to the villin/gelsolin family. In terms of assembly, binds to actin and to fibronectin. In terms of tissue distribution, isoform 1 and isoform 2 are ubiquitously expressed in early embryo. Isoform 1 is expressed in the fat body, and is abundant in hemolymph. Isoform 2 is expressed in parts of the gut.

Its subcellular location is the cytoplasm. The protein localises to the cytoskeleton. It is found in the secreted. Its function is as follows. Calcium-regulated, actin-modulating protein that binds to the plus (or barbed) ends of actin monomers or filaments, preventing monomer exchange (end-blocking or capping). It can promote the assembly of monomers into filaments (nucleation) as well as sever filaments already formed. This Drosophila melanogaster (Fruit fly) protein is Gelsolin (Gel).